Here is a 351-residue protein sequence, read N- to C-terminus: Uroporphyrinogen decarboxylase (351 aa).

Residues Arg-25–Arg-29, Phe-43, Asp-74, Tyr-151, Ser-206, and His-325 contribute to the substrate site.

It belongs to the uroporphyrinogen decarboxylase family. As to quaternary structure, homodimer.

The protein localises to the cytoplasm. The catalysed reaction is uroporphyrinogen III + 4 H(+) = coproporphyrinogen III + 4 CO2. Its pathway is porphyrin-containing compound metabolism; protoporphyrin-IX biosynthesis; coproporphyrinogen-III from 5-aminolevulinate: step 4/4. In terms of biological role, catalyzes the decarboxylation of four acetate groups of uroporphyrinogen-III to yield coproporphyrinogen-III. This is Uroporphyrinogen decarboxylase from Chlorobaculum tepidum (strain ATCC 49652 / DSM 12025 / NBRC 103806 / TLS) (Chlorobium tepidum).